A 225-amino-acid polypeptide reads, in one-letter code: MSTWFMFMFQESNSYYADNLISFHNMVMMIIIMISTLTVYIILDLFMNKFSNLFLLKNHNIEIIWTIIPIIILLIICFPSLKILYLIDEIVNPFFSIKSIGHQWYWSYEYPEFNNIEFDSYMLNYNNLNQFRLLETDNRMVIPMKIPLRLITTSTDVIHSWTVPSLGIKVDAVPGRINQLNLISKRPGIFFGQCSEICGMNHSFMPIMIESTSFQYFLNWVNKQI.

At 1-25 (MSTWFMFMFQESNSYYADNLISFHN) the chain is on the mitochondrial intermembrane side. A helical transmembrane segment spans residues 26–47 (MVMMIIIMISTLTVYIILDLFM). Residues 48-62 (NKFSNLFLLKNHNIE) are Mitochondrial matrix-facing. The helical transmembrane segment at 63–82 (IIWTIIPIIILLIICFPSLK) threads the bilayer. Residues 83 to 225 (ILYLIDEIVN…YFLNWVNKQI (143 aa)) lie on the Mitochondrial intermembrane side of the membrane. Cu cation is bound by residues His-159, Cys-194, Glu-196, Cys-198, His-202, and Met-205. Glu-196 is a binding site for Mg(2+).

It belongs to the cytochrome c oxidase subunit 2 family. As to quaternary structure, component of the cytochrome c oxidase (complex IV, CIV), a multisubunit enzyme composed of a catalytic core of 3 subunits and several supernumerary subunits. The complex exists as a monomer or a dimer and forms supercomplexes (SCs) in the inner mitochondrial membrane with ubiquinol-cytochrome c oxidoreductase (cytochrome b-c1 complex, complex III, CIII). The cofactor is Cu cation.

The protein localises to the mitochondrion inner membrane. The enzyme catalyses 4 Fe(II)-[cytochrome c] + O2 + 8 H(+)(in) = 4 Fe(III)-[cytochrome c] + 2 H2O + 4 H(+)(out). In terms of biological role, component of the cytochrome c oxidase, the last enzyme in the mitochondrial electron transport chain which drives oxidative phosphorylation. The respiratory chain contains 3 multisubunit complexes succinate dehydrogenase (complex II, CII), ubiquinol-cytochrome c oxidoreductase (cytochrome b-c1 complex, complex III, CIII) and cytochrome c oxidase (complex IV, CIV), that cooperate to transfer electrons derived from NADH and succinate to molecular oxygen, creating an electrochemical gradient over the inner membrane that drives transmembrane transport and the ATP synthase. Cytochrome c oxidase is the component of the respiratory chain that catalyzes the reduction of oxygen to water. Electrons originating from reduced cytochrome c in the intermembrane space (IMS) are transferred via the dinuclear copper A center (CU(A)) of subunit 2 and heme A of subunit 1 to the active site in subunit 1, a binuclear center (BNC) formed by heme A3 and copper B (CU(B)). The BNC reduces molecular oxygen to 2 water molecules using 4 electrons from cytochrome c in the IMS and 4 protons from the mitochondrial matrix. The sequence is that of Cytochrome c oxidase subunit 2 (COII) from Apis mellifera ligustica (Common honeybee).